The following is a 423-amino-acid chain: Tumor necrosis factor receptor superfamily member 19 (423 aa).

Residues 1 to 29 (MALKVLLEQEKTFFTLLVLLGYLSCKVTC) form the signal peptide. At 30–170 (ESGDCRQQEF…TASSPRDTAL (141 aa)) the chain is on the extracellular side. TNFR-Cys repeat units lie at residues 33-72 (DCRQQEFRDRSGNCVPCNQCGPGMELSKECGFGYGEDAQC), 74-114 (TCRL…DAIC), and 116-149 (DCLPGFYRKTKLVGFQDMECVPCGDPPPPYEPHC). Disulfide bonds link cysteine 34–cysteine 46, cysteine 49–cysteine 62, cysteine 52–cysteine 72, cysteine 75–cysteine 89, cysteine 92–cysteine 106, cysteine 95–cysteine 114, cysteine 117–cysteine 135, and cysteine 138–cysteine 149. Residue asparagine 105 is glycosylated (N-linked (GlcNAc...) asparagine). A helical transmembrane segment spans residues 171 to 191 (AAVICSALATVLLALLILCVI). Topologically, residues 192 to 423 (YCKRQFMEKK…LQVRQRLGSL (232 aa)) are cytoplasmic.

Associates with TRAF1, TRAF2, TRAF3 and TRAF5. Interacts with LINGO1. As to expression, highly expressed in prostate. Detected at lower levels in thymus, spleen, testis, uterus, small intestine, colon and peripheral blood leukocytes.

It is found in the membrane. Can mediate activation of JNK and NF-kappa-B. May promote caspase-independent cell death. The polypeptide is Tumor necrosis factor receptor superfamily member 19 (TNFRSF19) (Homo sapiens (Human)).